The following is a 700-amino-acid chain: Pentatricopeptide repeat-containing protein 1, mitochondrial (700 aa).

Residues 49-93 (SSSQLPLGQERQENTGSLGSDPSHSNSTATQEEDEEEEESFGTLS) form a disordered region. Over residues 62–78 (NTGSLGSDPSHSNSTAT) the composition is skewed to polar residues. A compositionally biased stretch (acidic residues) spans 79 to 88 (QEEDEEEEES). PPR repeat units follow at residues 135 to 171 (TPYWYFLQCKHLIKEGKLVEALDLFERQMLKEERLQP), 172 to 206 (MESNYTVLIGGCGRVGYLKKAFNLYNQMKKRDLEP), 207 to 245 (SDATYTALFNVCAESPWKDSALQSALKLRQQLQAKNFEL), 246 to 280 (NLKTYHALLKMAAKCADLRMCLDVFKEIIHKGHVV), 281 to 317 (TEETFSFLLMGCIQDKKTGFRYALQVWRLMLSLGLQP), and 318 to 354 (SRDSYNLLLVAARDCGLGDPQVASELLLKPREEATVL). Residues 393 to 414 (SQALGPPEPPEARVPGKAQPEV) form a disordered region. 3 PPR repeats span residues 519 to 553 (DLTFFNTLVRKKSKLGDLEGAKALLPVLAKRGLVP), 554 to 585 (NLQTFCNLAIGCHRPKDGLQLLTDMKKSQVTP), and 586 to 620 (NTHIYSALINAAIRKLNYTYLISILKDMKQNRVPV). The interval 672-700 (HPWQKFRTKPQGDQDTGKEADDGCALGGR) is disordered. Residues 681–692 (PQGDQDTGKEAD) show a composition bias toward basic and acidic residues.

The protein belongs to the PTCD1 family. In terms of assembly, associates with mitochondrial leucine tRNAs. Interacts with ELAC2. Abundant in testes, skeletal muscle and heart.

It localises to the mitochondrion. The protein localises to the mitochondrion matrix. In terms of biological role, mitochondrial protein implicated in negative regulation of leucine tRNA levels, as well as negative regulation of mitochondria-encoded proteins and COX activity. Also affects the 3'-processing of mitochondrial tRNAs. This chain is Pentatricopeptide repeat-containing protein 1, mitochondrial (PTCD1), found in Homo sapiens (Human).